A 346-amino-acid chain; its full sequence is Cell shape-determining protein MreC (346 aa).

The stretch at 89-118 (NRRLKAELAEMRQWRDRALALQDQNDRFKS) forms a coiled coil. A disordered region spans residues 292–346 (SLPPVTTEDPQTSILSNPVSRPVAPTPSPATATPSAAPAARPATTATPPQTGAPR). Polar residues predominate over residues 299–308 (EDPQTSILSN). Residues 309–340 (PVSRPVAPTPSPATATPSAAPAARPATTATPP) are compositionally biased toward low complexity.

Belongs to the MreC family. Interacts with penicillin-binding proteins (PBP2, PBP1a, PBP1b, PBP2a and PBP2b). Interacts with outer membrane proteins belonging to the TonB-dependent receptor family of transport proteins.

It is found in the periplasm. Functionally, involved in formation and maintenance of cell shape. Required for the spatial organization of components of the peptidoglycan-synthesizing holoenzyme in the periplasm and peptidoglycan synthetic activity. In Caulobacter vibrioides (strain NA1000 / CB15N) (Caulobacter crescentus), this protein is Cell shape-determining protein MreC.